We begin with the raw amino-acid sequence, 414 residues long: Carbohydrate sulfotransferase 12 (414 aa).

Residues Met-1 to Arg-5 are Cytoplasmic-facing. A helical; Signal-anchor for type II membrane protein transmembrane segment spans residues Leu-6–Trp-26. Residues Asp-27–Asp-414 lie on the Lumenal side of the membrane. The segment at Gln-80–Arg-125 is disordered. A compositionally biased stretch (basic and acidic residues) spans Glu-99–Arg-125. N-linked (GlcNAc...) asparagine glycosylation is present at Asn-134. Pro-171–Asn-177 is a binding site for 3'-phosphoadenylyl sulfate. The N-linked (GlcNAc...) asparagine glycan is linked to Asn-209. Arg-245–Ser-253 provides a ligand contact to 3'-phosphoadenylyl sulfate. 2 N-linked (GlcNAc...) asparagine glycosylation sites follow: Asn-280 and Asn-370.

Belongs to the sulfotransferase 2 family. As to expression, widely expressed. Expressed a high level in spinal chord, heart, spleen, thyroid, pituitary gland, adrenal gland, peripheral blood leukocytes, thymus, lung, small intestine, fetal kidney, fetal spleen and fetal lung.

It localises to the golgi apparatus membrane. The enzyme catalyses chondroitin beta-D-glucuronate + n 3'-phosphoadenylyl sulfate = chondroitin 4'-sulfate + n adenosine 3',5'-bisphosphate + n H(+). Functionally, catalyzes the transfer of sulfate to position 4 of the N-acetylgalactosamine (GalNAc) residue of chondroitin and desulfated dermatan sulfate. Chondroitin sulfate constitutes the predominant proteoglycan present in cartilage and is distributed on the surfaces of many cells and extracellular matrices. Activity toward partially desulfated dermatan sulfate is however lower. Does not form 4, 6-di-O-sulfated GalNAc when chondroitin sulfate C is used as an acceptor. This chain is Carbohydrate sulfotransferase 12 (CHST12), found in Homo sapiens (Human).